The sequence spans 155 residues: Protein SprT-like (155 aa).

Residues 7–145 enclose the SprT-like domain; sequence QRHMEEVSLQ…GSCGGKLIQT (139 aa). His67 provides a ligand contact to Zn(2+). The active site involves Glu68. His71 contacts Zn(2+).

The protein belongs to the SprT family. It depends on Zn(2+) as a cofactor.

The protein resides in the cytoplasm. The polypeptide is Protein SprT-like (Listeria monocytogenes serotype 4b (strain CLIP80459)).